The chain runs to 1148 residues: Envelopment polyprotein (1148 aa).

Residues 1 to 23 form the signal peptide; it reads MGKSSPVCLYLILQGLLLFDTVN. Over 24–496 the chain is Lumenal; sequence AKNLNELKME…PGLHGWATVL (473 aa). Disulfide bonds link C34–C159, C68–C165, C117–C136, C141–C146, C183–C193, and C218–C257. N142 carries an N-linked (GlcNAc...) asparagine; by host glycan. N357 is a glycosylation site (N-linked (GlcNAc...) asparagine; by host). Disulfide bonds link C386/C445, C390/C399, C415/C434, and C462/C485. N-linked (GlcNAc...) asparagine; by host glycosylation is present at N409. The helical transmembrane segment at 497 to 517 threads the bilayer; sequence LLLTFCFGWVLIPTITMILLK. The Cytoplasmic segment spans residues 518 to 637; that stretch reads ILIAFAYLCS…LSLFRYRSRF (120 aa). The segment at 526–543 is binding to the ribonucleoprotein; that stretch reads CSKYNTDSKFRILVEKVK. 2 consecutive CCHC-type zinc fingers follow at residues 555–575 and 580–601; these read CEVCQYECETAKELESHRKSC and CPYCLNPSEATPSALQAHFKVC. Binding to the ribonucleoprotein stretches follow at residues 598–615 and 621–635; these read FKVCKLTSRFQENLKKSL and MQGCYRTLSLFRYRS. One can recognise an ITAM domain in the interval 621–644; the sequence is MQGCYRTLSLFRYRSRFFVGLVWC. The YxxL motif lies at 625 to 628; it reads YRTL. A helical membrane pass occupies residues 638-658; sequence FVGLVWCMLLVLELIVWAASA. Topologically, residues 659 to 1115 are lumenal; sequence ETQNLNDGWT…WVLGVLNGNW (457 aa). Disulfide bonds link C745–C780, C749–C787, C761–C894, C775–C905, C790–C913, C816–C825, C833–C842, and C873–C877. The tract at residues 767–787 is fusion loop; it reads YEYETGWGCNPPDCPGVGTGC. An N-linked (GlcNAc...) asparagine; by host glycan is attached at N937. 5 cysteine pairs are disulfide-bonded: C979/C1009, C1002/C1054, C1019/C1024, C1055/C1060, and C1094/C1098. Residues 1116–1136 form a helical membrane-spanning segment; that stretch reads MVVAVLIALLILSIFLFALCC. The interval 1131–1148 is binding to the ribonucleoprotein; that stretch reads LFALCCPRRPSYKKDHKP. Over 1137 to 1148 the chain is Cytoplasmic; sequence PRRPSYKKDHKP.

It belongs to the hantavirus envelope glycoprotein family. Homodimer. Homotetramer; forms heterotetrameric Gn-Gc spikes in the pre-fusion conformation. Interacts (via C-terminus) with the nucleoprotein. Interacts with host TUFM; this interaction contributes to the virus-induced degradation of mitochondria by autophagy, which leads to degradation of host MAVS and inhibition of type I interferon (IFN) responses. Interacts with host MAP1LC3B; this interaction contributes to the virus-induced degradation of mitochondria by autophagy, which leads to degradation of host MAVS and inhibition of type I interferon (IFN) responses. In terms of assembly, homodimer. Homotetramer; forms heterotetrameric Gn-Gc spikes in the pre-fusion conformation. Homotrimer; forms homotrimer in the post-fusion conformation at acidic pH. Interacts (via C-terminus) with the nucleoprotein. Envelope polyprotein precursor is quickly cleaved in vivo just after synthesis, presumably by host signal peptidase.

Its subcellular location is the virion membrane. It is found in the host cell surface. It localises to the host Golgi apparatus membrane. The protein resides in the host endoplasmic reticulum membrane. The protein localises to the host mitochondrion. Forms homotetramers with glycoprotein C at the surface of the virion. Attaches the virion to host cell receptors including integrin ITGAV/ITGB3. This attachment induces virion internalization predominantly through clathrin-dependent endocytosis. Mediates the assembly and budding of infectious virus particles through its interaction with the nucleocapsid protein and the viral genome. May dysregulate normal immune and endothelial cell responses through an ITAM motif. Translocates to mitochondria, binds to host TUFM and recruits MAP1LC3B. These interactions induce mitochondrial autophagy and therefore destruction of host MAVS leading to inhibition of type I interferon (IFN) responses. Concomitant breakdown of glycoprotein N is apparently prevented by the nucleoprotein that may inhibit Gn-stimulated autophagosome-lysosome fusion. Interacts with the viral genomic RNA. Functionally, forms heterooctamers with glycoprotein N at the surface of the virion. Attaches the virion to host cell receptors including integrin ITGAV/ITGB3. This attachment induces virion internalization predominantly through clathrin-dependent endocytosis. Class II fusion protein that promotes fusion of viral membrane with host endosomal membrane after endocytosis of the virion. This is Envelopment polyprotein (GP) from Homo sapiens (Human).